The chain runs to 220 residues: Thiamine-phosphate synthase (220 aa).

Residues 39 to 43 and Asn80 contribute to the 4-amino-2-methyl-5-(diphosphooxymethyl)pyrimidine site; that span reads QLRDK. Asp81 and Asp100 together coordinate Mg(2+). Ser119 is a 4-amino-2-methyl-5-(diphosphooxymethyl)pyrimidine binding site. A 2-[(2R,5Z)-2-carboxy-4-methylthiazol-5(2H)-ylidene]ethyl phosphate-binding site is contributed by 145–147; that stretch reads TPT. Lys148 provides a ligand contact to 4-amino-2-methyl-5-(diphosphooxymethyl)pyrimidine. A 2-[(2R,5Z)-2-carboxy-4-methylthiazol-5(2H)-ylidene]ethyl phosphate-binding site is contributed by Gly176.

It belongs to the thiamine-phosphate synthase family. Requires Mg(2+) as cofactor.

It carries out the reaction 2-[(2R,5Z)-2-carboxy-4-methylthiazol-5(2H)-ylidene]ethyl phosphate + 4-amino-2-methyl-5-(diphosphooxymethyl)pyrimidine + 2 H(+) = thiamine phosphate + CO2 + diphosphate. The catalysed reaction is 2-(2-carboxy-4-methylthiazol-5-yl)ethyl phosphate + 4-amino-2-methyl-5-(diphosphooxymethyl)pyrimidine + 2 H(+) = thiamine phosphate + CO2 + diphosphate. The enzyme catalyses 4-methyl-5-(2-phosphooxyethyl)-thiazole + 4-amino-2-methyl-5-(diphosphooxymethyl)pyrimidine + H(+) = thiamine phosphate + diphosphate. It participates in cofactor biosynthesis; thiamine diphosphate biosynthesis; thiamine phosphate from 4-amino-2-methyl-5-diphosphomethylpyrimidine and 4-methyl-5-(2-phosphoethyl)-thiazole: step 1/1. Its function is as follows. Condenses 4-methyl-5-(beta-hydroxyethyl)thiazole monophosphate (THZ-P) and 2-methyl-4-amino-5-hydroxymethyl pyrimidine pyrophosphate (HMP-PP) to form thiamine monophosphate (TMP). This chain is Thiamine-phosphate synthase, found in Mycobacterium ulcerans (strain Agy99).